We begin with the raw amino-acid sequence, 107 residues long: NADH-quinone oxidoreductase subunit K 2 (107 aa).

Transmembrane regions (helical) follow at residues 3-23 (LPIY…LWGA), 30-50 (VRIL…LITF), and 67-87 (ILTL…LAII).

Belongs to the complex I subunit 4L family. In terms of assembly, NDH-1 is composed of 14 different subunits. Subunits NuoA, H, J, K, L, M, N constitute the membrane sector of the complex.

Its subcellular location is the cell membrane. It carries out the reaction a quinone + NADH + 5 H(+)(in) = a quinol + NAD(+) + 4 H(+)(out). NDH-1 shuttles electrons from NADH, via FMN and iron-sulfur (Fe-S) centers, to quinones in the respiratory chain. The immediate electron acceptor for the enzyme in this species is believed to be a menaquinone. Couples the redox reaction to proton translocation (for every two electrons transferred, four hydrogen ions are translocated across the cytoplasmic membrane), and thus conserves the redox energy in a proton gradient. This Symbiobacterium thermophilum (strain DSM 24528 / JCM 14929 / IAM 14863 / T) protein is NADH-quinone oxidoreductase subunit K 2.